Here is a 154-residue protein sequence, read N- to C-terminus: 6,7-dimethyl-8-ribityllumazine synthase (154 aa).

5-amino-6-(D-ribitylamino)uracil-binding positions include Phe-23, 57-59, and 81-83; these read AFE and AVI. 86–87 is a (2S)-2-hydroxy-3-oxobutyl phosphate binding site; that stretch reads ST. The active-site Proton donor is the His-89. Phe-114 is a binding site for 5-amino-6-(D-ribitylamino)uracil. A (2S)-2-hydroxy-3-oxobutyl phosphate-binding site is contributed by Arg-128.

This sequence belongs to the DMRL synthase family.

It catalyses the reaction (2S)-2-hydroxy-3-oxobutyl phosphate + 5-amino-6-(D-ribitylamino)uracil = 6,7-dimethyl-8-(1-D-ribityl)lumazine + phosphate + 2 H2O + H(+). It functions in the pathway cofactor biosynthesis; riboflavin biosynthesis; riboflavin from 2-hydroxy-3-oxobutyl phosphate and 5-amino-6-(D-ribitylamino)uracil: step 1/2. Functionally, catalyzes the formation of 6,7-dimethyl-8-ribityllumazine by condensation of 5-amino-6-(D-ribitylamino)uracil with 3,4-dihydroxy-2-butanone 4-phosphate. This is the penultimate step in the biosynthesis of riboflavin. The sequence is that of 6,7-dimethyl-8-ribityllumazine synthase from Syntrophotalea carbinolica (strain DSM 2380 / NBRC 103641 / GraBd1) (Pelobacter carbinolicus).